Reading from the N-terminus, the 225-residue chain is Glutathione S-transferase U2 (225 aa).

A GST N-terminal domain is found at 6–85 (ESVKLLGFWI…YIDQTWNNNP (80 aa)). Residues 16–17 (SP), 42–43 (KK), 56–57 (KV), and 69–70 (ES) each bind glutathione. Residues 90–217 (DPYEKAMVRF…EKHIERMKKI (128 aa)) enclose the GST C-terminal domain. At threonine 151 the chain carries Phosphothreonine.

This sequence belongs to the GST superfamily. Tau family.

Its subcellular location is the cytoplasm. The protein resides in the cytosol. The catalysed reaction is RX + glutathione = an S-substituted glutathione + a halide anion + H(+). Its function is as follows. May be involved in the conjugation of reduced glutathione to a wide number of exogenous and endogenous hydrophobic electrophiles and have a detoxification role against certain herbicides. In Arabidopsis thaliana (Mouse-ear cress), this protein is Glutathione S-transferase U2 (GSTU2).